We begin with the raw amino-acid sequence, 212 residues long: Large ribosomal subunit protein uL3 (212 aa).

The tract at residues Arg133 to Lys152 is disordered.

The protein belongs to the universal ribosomal protein uL3 family. Part of the 50S ribosomal subunit. Forms a cluster with proteins L14 and L19.

Functionally, one of the primary rRNA binding proteins, it binds directly near the 3'-end of the 23S rRNA, where it nucleates assembly of the 50S subunit. This Syntrophomonas wolfei subsp. wolfei (strain DSM 2245B / Goettingen) protein is Large ribosomal subunit protein uL3.